The primary structure comprises 55 residues: MPQLNPAPWFAILVFSWLVFLTVIPPKVLGHIFTNEPTSQSTEKTKPEPWNWPWH.

A helical membrane pass occupies residues 4–24; that stretch reads LNPAPWFAILVFSWLVFLTVI. A disordered region spans residues 36 to 55; the sequence is EPTSQSTEKTKPEPWNWPWH.

Belongs to the ATPase protein 8 family. In terms of assembly, component of the ATP synthase complex composed at least of ATP5F1A/subunit alpha, ATP5F1B/subunit beta, ATP5MC1/subunit c (homooctomer), MT-ATP6/subunit a, MT-ATP8/subunit 8, ATP5ME/subunit e, ATP5MF/subunit f, ATP5MG/subunit g, ATP5MK/subunit k, ATP5MJ/subunit j, ATP5F1C/subunit gamma, ATP5F1D/subunit delta, ATP5F1E/subunit epsilon, ATP5PF/subunit F6, ATP5PB/subunit b, ATP5PD/subunit d, ATP5PO/subunit OSCP. ATP synthase complex consists of a soluble F(1) head domain (subunits alpha(3) and beta(3)) - the catalytic core - and a membrane F(0) domain - the membrane proton channel (subunits c, a, 8, e, f, g, k and j). These two domains are linked by a central stalk (subunits gamma, delta, and epsilon) rotating inside the F1 region and a stationary peripheral stalk (subunits F6, b, d, and OSCP).

It localises to the mitochondrion membrane. Functionally, subunit 8, of the mitochondrial membrane ATP synthase complex (F(1)F(0) ATP synthase or Complex V) that produces ATP from ADP in the presence of a proton gradient across the membrane which is generated by electron transport complexes of the respiratory chain. ATP synthase complex consist of a soluble F(1) head domain - the catalytic core - and a membrane F(1) domain - the membrane proton channel. These two domains are linked by a central stalk rotating inside the F(1) region and a stationary peripheral stalk. During catalysis, ATP synthesis in the catalytic domain of F(1) is coupled via a rotary mechanism of the central stalk subunits to proton translocation. In vivo, can only synthesize ATP although its ATP hydrolase activity can be activated artificially in vitro. Part of the complex F(0) domain. This Salvelinus alpinus (Arctic char) protein is ATP synthase F(0) complex subunit 8.